Here is a 437-residue protein sequence, read N- to C-terminus: Adenylosuccinate synthetase (437 aa).

GTP is bound by residues 12–18 and 40–42; these read GDEGKGK and GHT. The active-site Proton acceptor is aspartate 13. Residues aspartate 13 and glycine 40 each coordinate Mg(2+). IMP-binding positions include 13 to 16, 38 to 41, threonine 128, arginine 142, glutamine 223, threonine 238, and arginine 302; these read DEGK and NAGH. The active-site Proton donor is histidine 41. The segment at 119–138 is disordered; the sequence is QRGERRIGTTGRGIGPTYAD. Position 298–304 (298–304) interacts with substrate; it reads TTTGRRR. Residues arginine 304, 330–332, and 412–414 contribute to the GTP site; these read KLD and SLG.

The protein belongs to the adenylosuccinate synthetase family. In terms of assembly, homodimer. Mg(2+) serves as cofactor.

The protein resides in the cytoplasm. The catalysed reaction is IMP + L-aspartate + GTP = N(6)-(1,2-dicarboxyethyl)-AMP + GDP + phosphate + 2 H(+). The protein operates within purine metabolism; AMP biosynthesis via de novo pathway; AMP from IMP: step 1/2. In terms of biological role, plays an important role in the de novo pathway of purine nucleotide biosynthesis. Catalyzes the first committed step in the biosynthesis of AMP from IMP. In Synechococcus sp. (strain WH7803), this protein is Adenylosuccinate synthetase.